Consider the following 89-residue polypeptide: UPF0147 protein Saci_0891 (89 aa).

It belongs to the UPF0147 family.

In Sulfolobus acidocaldarius (strain ATCC 33909 / DSM 639 / JCM 8929 / NBRC 15157 / NCIMB 11770), this protein is UPF0147 protein Saci_0891.